A 428-amino-acid polypeptide reads, in one-letter code: MAFLALGINHKTASVDVRERVAFTPEQLVEALQQLCRLTDSREAAILSTCNRSELYIEQDQLSADIVLRWLADYHHLSLDELRASAYVHEDDAAVRHMMRVASGLDSLVLGEPQILGQMKSAYAVAREAGTIGPLLGRLFQATFNAAKQVRTDTAIGENPVSVAFAAVSLAKQIFSDLQRSQALLIGAGETITLVARHLHELGVKRIVVANRTLERASLLAEQFGAHAVLLSDIPAELVRSDIVISSTASQLPILGKGAVESALKLRKHKPIFMVDIAVPRDIEPEVGELDDVYLYSVDDLHEVVAENLKSRQGAAQAAEEMVSVGADDFMVRLRELAAVDVLKAYRQQSERLRDEELQKALRLLANGGNAEDVLGQLARGLTNKLLHAPSVQLKKLSAEGRLDALAMAQELFALEGSPDSFSDKKPQ.

Substrate is bound by residues 49 to 52 (TCNR), Ser107, 112 to 114 (EPQ), and Gln118. The active-site Nucleophile is the Cys50. 187–192 (GAGETI) contacts NADP(+).

Belongs to the glutamyl-tRNA reductase family. As to quaternary structure, homodimer.

It carries out the reaction (S)-4-amino-5-oxopentanoate + tRNA(Glu) + NADP(+) = L-glutamyl-tRNA(Glu) + NADPH + H(+). It functions in the pathway porphyrin-containing compound metabolism; protoporphyrin-IX biosynthesis; 5-aminolevulinate from L-glutamyl-tRNA(Glu): step 1/2. In terms of biological role, catalyzes the NADPH-dependent reduction of glutamyl-tRNA(Glu) to glutamate 1-semialdehyde (GSA). This chain is Glutamyl-tRNA reductase, found in Pseudomonas fluorescens (strain Pf0-1).